We begin with the raw amino-acid sequence, 363 residues long: Phosphoserine aminotransferase (363 aa).

An L-glutamate-binding site is contributed by arginine 42. Residues 76–77 (GR), tryptophan 102, threonine 156, aspartate 175, and glutamine 198 each bind pyridoxal 5'-phosphate. Lysine 199 carries the N6-(pyridoxal phosphate)lysine modification. Residue 240–241 (NT) participates in pyridoxal 5'-phosphate binding.

It belongs to the class-V pyridoxal-phosphate-dependent aminotransferase family. SerC subfamily. As to quaternary structure, homodimer. Requires pyridoxal 5'-phosphate as cofactor.

It localises to the cytoplasm. It carries out the reaction O-phospho-L-serine + 2-oxoglutarate = 3-phosphooxypyruvate + L-glutamate. It catalyses the reaction 4-(phosphooxy)-L-threonine + 2-oxoglutarate = (R)-3-hydroxy-2-oxo-4-phosphooxybutanoate + L-glutamate. Its pathway is amino-acid biosynthesis; L-serine biosynthesis; L-serine from 3-phospho-D-glycerate: step 2/3. It participates in cofactor biosynthesis; pyridoxine 5'-phosphate biosynthesis; pyridoxine 5'-phosphate from D-erythrose 4-phosphate: step 3/5. Its function is as follows. Catalyzes the reversible conversion of 3-phosphohydroxypyruvate to phosphoserine and of 3-hydroxy-2-oxo-4-phosphonooxybutanoate to phosphohydroxythreonine. The chain is Phosphoserine aminotransferase from Shewanella halifaxensis (strain HAW-EB4).